The primary structure comprises 604 residues: MKCAHFIDGPHCVKACPAGVLGENDTLVRKYADANAVCQLCHPNCTRGCKGPGLEGCPNGSKTPSIAAGVVGGLLCLVVVGLGIGLYLRRRHIVRKRTLRRLLQERELVEPLTPSGEAPNQAHLRILKETEFKKVKVLGSGAFGTIYKGLWIPEGEKVKIPVAIKELREATSPKANKEILDEAYVMASVDNPHVCRLLGICLTSTVQLITQLMPYGCLLDYIREHKDNIGSQYLLNWCVQIAKGMNYLEERRLVHRDLAARNVLVKTPQHVKITDFGLAKLLGADEKEYHAEGGKVPIKWMALESILHRIYTHQSDVWSYGVTVWELMTFGSKPYDGIPASEISSVLEKGERLPQPPICTIDVYMIMVKCWMIDADSRPKFRELIAEFSKMARDPPRYLVIQGDERMHLPSPTDSKFYRTLMEEEDMEDIVDADEYLVPHQGFFNSPSTSRTPLLSSLSATSNNSATNCIDRNGQGHPVREDSFVQRYSSDPTGNFLEESIDDGFLPAPEYVNQLMPKKPSTAMVQNQIYNFISLTAISKLPMDSRYQNSHSTAVDNPEYLNTNQSPLAKTVFESSPYWIQSGNHQINLDNPDYQQDFLPTSCS.

Residues 132–399 (FKKVKVLGSG…KMARDPPRYL (268 aa)) enclose the Protein kinase domain. ATP-binding positions include 138–146 (LGSGAFGTI) and Lys-165. Asp-257 acts as the Proton acceptor in catalysis.

Belongs to the protein kinase superfamily. Tyr protein kinase family. EGF receptor subfamily.

It carries out the reaction L-tyrosyl-[protein] + ATP = O-phospho-L-tyrosyl-[protein] + ADP + H(+). Functionally, the v-erbB oncogene transforms avian fibroblasts and erythroblasts in culture and induces sarcomas and erythroleukemias in chickens. It is a truncated and mutated version of the receptor for epidermal growth factor. The sequence is that of Tyrosine-protein kinase transforming protein erbB (V-ERBB) from Galliformes.